Consider the following 360-residue polypeptide: Phospho-N-acetylmuramoyl-pentapeptide-transferase (360 aa).

10 helical membrane-spanning segments follow: residues 26–46 (AILGLMTALMFSLWWGPKMIA), 73–93 (TMGGLLILAGVFISVLLWGDL), 97–117 (YVWVVLFVLGSFGLIGFIDDY), 132–152 (WKYLLQSLAALLIAVYLYASA), 168–188 (VMPQLGGFFIVLVYFTIVGSS), 199–219 (GLAIMPTVMVAAAFALIAYLS), 236–256 (AGELVIVCTAIVGAGLGFLWF), 263–283 (VFMGDVGSLSLGAALGTIAVL), 288–308 (ILLVIMGGVFVMETVSVILQV), and 338–358 (VIVRFWIISLFLVLLGLATLK).

It belongs to the glycosyltransferase 4 family. MraY subfamily. Requires Mg(2+) as cofactor.

The protein localises to the cell inner membrane. It carries out the reaction UDP-N-acetyl-alpha-D-muramoyl-L-alanyl-gamma-D-glutamyl-meso-2,6-diaminopimeloyl-D-alanyl-D-alanine + di-trans,octa-cis-undecaprenyl phosphate = di-trans,octa-cis-undecaprenyl diphospho-N-acetyl-alpha-D-muramoyl-L-alanyl-D-glutamyl-meso-2,6-diaminopimeloyl-D-alanyl-D-alanine + UMP. The protein operates within cell wall biogenesis; peptidoglycan biosynthesis. Its function is as follows. Catalyzes the initial step of the lipid cycle reactions in the biosynthesis of the cell wall peptidoglycan: transfers peptidoglycan precursor phospho-MurNAc-pentapeptide from UDP-MurNAc-pentapeptide onto the lipid carrier undecaprenyl phosphate, yielding undecaprenyl-pyrophosphoryl-MurNAc-pentapeptide, known as lipid I. This chain is Phospho-N-acetylmuramoyl-pentapeptide-transferase, found in Shewanella halifaxensis (strain HAW-EB4).